Here is a 90-residue protein sequence, read N- to C-terminus: Probable Fe(2+)-trafficking protein (90 aa).

Belongs to the Fe(2+)-trafficking protein family.

Its function is as follows. Could be a mediator in iron transactions between iron acquisition and iron-requiring processes, such as synthesis and/or repair of Fe-S clusters in biosynthetic enzymes. The chain is Probable Fe(2+)-trafficking protein from Koribacter versatilis (strain Ellin345).